The sequence spans 227 residues: DNA repair protein RecO (227 aa).

The protein belongs to the RecO family.

Involved in DNA repair and RecF pathway recombination. The protein is DNA repair protein RecO of Pseudomonas putida (strain ATCC 47054 / DSM 6125 / CFBP 8728 / NCIMB 11950 / KT2440).